A 412-amino-acid polypeptide reads, in one-letter code: Probable histone-binding protein rba-1 (412 aa).

WD repeat units follow at residues 117-157 (NHPG…SEPK), 169-209 (GHEG…TISG), 219-259 (GHSS…PQLT), 262-302 (GHTA…KKMY), 306-346 (HHND…DPSS), and 365-405 (GHTG…VSSE).

It belongs to the WD repeat RBAP46/RBAP48/MSI1 family. As to quaternary structure, binds directly to helix 1 of the histone fold of histone H4, a region that is not accessible when H4 is in chromatin. Interacts with zft-11; the interaction is required to suppress the activation of non-neuronal genes in neurons.

The protein localises to the nucleus. Functionally, core histone-binding subunit that may target chromatin assembly factors, chromatin remodeling factors and histone deacetylases to their histone substrates in a manner that is regulated by nucleosomal DNA. Plays a role in regulating cell cycle progression. Required to repress the induction of vulval development by Ras signaling. In association with the zinc finger protein ztf-11, negatively regulates the expression of non-neuronal genes during neurogenesis. The chain is Probable histone-binding protein rba-1 from Caenorhabditis elegans.